The primary structure comprises 257 residues: 3-deoxy-manno-octulosonate cytidylyltransferase (257 aa).

Belongs to the KdsB family.

It localises to the cytoplasm. It catalyses the reaction 3-deoxy-alpha-D-manno-oct-2-ulosonate + CTP = CMP-3-deoxy-beta-D-manno-octulosonate + diphosphate. Its pathway is nucleotide-sugar biosynthesis; CMP-3-deoxy-D-manno-octulosonate biosynthesis; CMP-3-deoxy-D-manno-octulosonate from 3-deoxy-D-manno-octulosonate and CTP: step 1/1. It functions in the pathway bacterial outer membrane biogenesis; lipopolysaccharide biosynthesis. Functionally, activates KDO (a required 8-carbon sugar) for incorporation into bacterial lipopolysaccharide in Gram-negative bacteria. This chain is 3-deoxy-manno-octulosonate cytidylyltransferase, found in Xylella fastidiosa (strain M23).